Here is a 521-residue protein sequence, read N- to C-terminus: Forkhead box protein N4 (521 aa).

The segment at residues 197–293 (KPIYSYSCLI…EEMHKWKRKD (97 aa)) is a DNA-binding region (fork-head). The interval 371 to 406 (PQAHLAPDSPAPAQTPPLHALPSLSPGPLPQPAMGR) is disordered.

As to expression, mainly expressed in proliferator progenitor cells in brain and retina rather than differentiated cells. In contrast, is expressed only in postmitotic epithelial cells rather than in proliferative progenitors in the proximal airway.

The protein resides in the nucleus. In terms of biological role, transcription factor essential for neural and some non-neural tissues development, such as retina and lung respectively. Binds to an 11-bp consensus sequence containing the invariant tetranucleotide 5'-ACGC-3'. During development of the central nervous system, is required to specify the amacrine and horizontal cell fates from multipotent retinal progenitors while suppressing the alternative photoreceptor cell fates through activating DLL4-NOTCH signaling. Also acts synergistically with ASCL1/MASH1 to activate DLL4-NOTCH signaling and drive commitment of p2 progenitors to the V2b interneuron fates during spinal cord neurogenesis. In development of non-neural tissues, plays an essential role in the specification of the atrioventricular canal and is indirectly required for patterning the distal airway during lung development. This Mus musculus (Mouse) protein is Forkhead box protein N4 (Foxn4).